Here is a 769-residue protein sequence, read N- to C-terminus: Glutathione biosynthesis bifunctional protein GshAB (769 aa).

The segment at 1 to 347 (MLDSFKEDPN…QLADENENNI (347 aa)) is glutamate--cysteine ligase. One can recognise an ATP-grasp domain in the interval 514–768 (KLVLAEHDIR…IGDKILDFLF (255 aa)). 541 to 599 (SLFEDKQIVVKPKSTNYGWGISIFKNKFTLEDYQEALNIAFSYDSSVIIEEFIPGDEFR) provides a ligand contact to ATP. Aspartate 721, glutamate 738, and asparagine 740 together coordinate Mg(2+). Aspartate 721, glutamate 738, and asparagine 740 together coordinate Mn(2+).

In the N-terminal section; belongs to the glutamate--cysteine ligase type 1 family. Type 2 subfamily. In terms of assembly, monomer. Mg(2+) serves as cofactor. The cofactor is Mn(2+).

It catalyses the reaction L-cysteine + L-glutamate + ATP = gamma-L-glutamyl-L-cysteine + ADP + phosphate + H(+). The enzyme catalyses gamma-L-glutamyl-L-cysteine + glycine + ATP = glutathione + ADP + phosphate + H(+). The protein operates within sulfur metabolism; glutathione biosynthesis; glutathione from L-cysteine and L-glutamate: step 1/2. It participates in sulfur metabolism; glutathione biosynthesis; glutathione from L-cysteine and L-glutamate: step 2/2. Synthesizes glutathione from L-glutamate and L-cysteine via gamma-L-glutamyl-L-cysteine. The protein is Glutathione biosynthesis bifunctional protein GshAB of Listeria monocytogenes serovar 1/2a (strain ATCC BAA-679 / EGD-e).